Consider the following 642-residue polypeptide: MSKSKGKGSSDNVMVMVRVRPFNKREEQEGATEIIEMDKTLCTVTLHKPVEKGAGSATSECLPSKKVFTYDAVYPSNSTQVEVFDESVREMIDGCLEGYNATVFAYGQTGSGKTHTMMGQKDNPGMIPLAFQRIFDFIAQAKDDQFLVRASFVEIYNEDLKDLLTGATHLQLKEDPVKGVFIKDLSEHPVSDERHIDKLIQKGNESRAVAATLMNATSSRSHSIFQVVLERMTVIDGRECIRVGKLNLVDLAGSERQEKTGATGDRLKEAAKINLSLTTLGCVISKLVEGSKHIPYRDSKLTRLLQDSLGGNSKTLMVVAVSPASTNYDETMSTLRYADRAKQIKNKPRINEDPKDAQIREMRNYVTKLEAQLAEIMQQANAGSGSEVEDKEAYDGEGNMGAGFTGYTADEMANVQSLRKNLDKTKKKRVKYVEQRKENEEAVSAEELATLEEEQKKLEEQIKESERKAKERQLMAKKIAALIEANKSKMVDKKVLENEERLKDAAIREARNALVAQKKEAERLKKELIEAEQQRKQLEEQCTTALDQAQQLELRLNEYKEQLAERREELHNVEADQAKEREIIRNDYADQIKLCELRQFIVSMFVPEEYQRSIESIASWDEDNQAWHFRTQKSHRGMAGFG.

One can recognise a Kinesin motor domain in the interval 12–344; it reads NVMVMVRVRP…LRYADRAKQI (333 aa). ATP is bound at residue 107–114; that stretch reads GQTGSGKT. Residues G110, G112, K113, and T114 each contribute to the ADP site. T114 is a binding site for Mg(2+). The stretch at 415-475 forms a coiled coil; that stretch reads VQSLRKNLDK…ERKAKERQLM (61 aa).

It belongs to the TRAFAC class myosin-kinesin ATPase superfamily. Kinesin family. Kinesin II subfamily.

Its subcellular location is the cell projection. It is found in the cilium. The protein localises to the flagellum. The protein resides in the cytoplasm. It localises to the cytoskeleton. Its subcellular location is the flagellum axoneme. It is found in the flagellum basal body. In terms of biological role, involved in anterograde intraflagellar transport (IFT). Involved in flagellar assembly. The polypeptide is Kinesin-2b (Giardia intestinalis (strain ATCC 50803 / WB clone C6) (Giardia lamblia)).